The chain runs to 579 residues: Probable cytochrome c oxidase subunit 1-alpha (579 aa).

Positions 1-21 (MSILNEPQGAAAAEDSYENEL) are disordered. Residues 44–64 (IGTLYLVTSFAFFCIGGVMAL) form a helical membrane-spanning segment. His90 lines the Fe(II)-heme a pocket. The next 6 membrane-spanning stretches (helical) occupy residues 93–113 (IMLL…IMPL), 125–145 (LNMF…GGFL), 174–194 (MWIM…VNFI), 217–237 (VLLT…ALFA), 262–282 (LFWF…FGII), and 295–315 (FGYM…VTVW). The Cu cation site is built by His268 and Tyr272. The 1'-histidyl-3'-tyrosine (His-Tyr) cross-link spans 268-272 (HPEVY). His317 and His318 together coordinate Cu cation. A run of 5 helical transmembrane segments spans residues 319–339 (MYVT…LIAV), 363–383 (MLWA…GVIL), 397–417 (FVVA…MFSG), 437–457 (ITFW…HWLG), and 480–500 (ISTI…YNVW). His401 contributes to the heme a3 binding site. His403 contacts Fe(II)-heme a.

This sequence belongs to the heme-copper respiratory oxidase family. In terms of assembly, associates with subunits II, III and IV to form cytochrome c oxidase. It depends on Cu(2+) as a cofactor. The cofactor is heme.

It localises to the cell membrane. It carries out the reaction 4 Fe(II)-[cytochrome c] + O2 + 8 H(+)(in) = 4 Fe(III)-[cytochrome c] + 2 H2O + 4 H(+)(out). Its pathway is energy metabolism; oxidative phosphorylation. Cytochrome c oxidase is the component of the respiratory chain that catalyzes the reduction of oxygen to water. Subunits 1-3 form the functional core of the enzyme complex. CO I is the catalytic subunit of the enzyme. Electrons originating in cytochrome c are transferred via the copper A center of subunit 2 and heme A of subunit 1 to the bimetallic center formed by heme A3 and copper B. This Streptomyces avermitilis (strain ATCC 31267 / DSM 46492 / JCM 5070 / NBRC 14893 / NCIMB 12804 / NRRL 8165 / MA-4680) protein is Probable cytochrome c oxidase subunit 1-alpha (ctaD1).